The following is a 467-amino-acid chain: Asparagine--tRNA ligase (467 aa).

It belongs to the class-II aminoacyl-tRNA synthetase family. Homodimer.

It localises to the cytoplasm. The enzyme catalyses tRNA(Asn) + L-asparagine + ATP = L-asparaginyl-tRNA(Asn) + AMP + diphosphate + H(+). The sequence is that of Asparagine--tRNA ligase from Phocaeicola vulgatus (strain ATCC 8482 / DSM 1447 / JCM 5826 / CCUG 4940 / NBRC 14291 / NCTC 11154) (Bacteroides vulgatus).